Reading from the N-terminus, the 452-residue chain is MFTSQEIIETINMVKQSNLDIRTITVGISLFDCSSDIPQRFIDNMRKKIIKYAGNLKNVANEIEDMFGLPIVNRRVALTPISLLTFSYSYEDLLKVALAIDEIAKELEIDLIGGYSASVHKNYDENTKKFISSIPDALASTDRLCSSVDVGTTRSGINLDVIAHLGHIIKDIAQKTKDKDSFGCARFVVFANAPDDNPFMAGAFHGTGEGDSAINVGISGPGVVKRALEGKKDASIDEVYETIKKMAFKITRAGQLVLKYASERLNIPMGIVDLSLAPTPKIGDSIAEILEEMGLEKVGGYGSTFALALLNDAVKKGGAMAASFTGGLSGAFIPVSEDSGMVKGVEAGALSLEKLEAMTSVCSVGLDMIVVPGDVEAEVISAMIADEIAIGIYNNKTTAVRVIPAYGKKEGDEVNFGGLLGRSKVMSINKSSPKRLIERGGRVPPPVISLRN.

Belongs to the UPF0210 family. As to quaternary structure, homodimer.

This chain is UPF0210 protein Csac_1314, found in Caldicellulosiruptor saccharolyticus (strain ATCC 43494 / DSM 8903 / Tp8T 6331).